The following is a 1798-amino-acid chain: Non-reducing polyketide synthase nscA (1798 aa).

The interval 25-256 is N-terminal acylcarrier protein transacylase domain (SAT); it reads RRLDQHSKDR…PLPVYDGLCH (232 aa). Positions 392–825 constitute a Ketosynthase family 3 (KS3) domain; sequence SSKLAIVGMA…GGNTTLLLED (434 aa). Residues cysteine 565, histidine 700, and histidine 743 each act as for beta-ketoacyl synthase activity in the active site. The malonyl-CoA:ACP transacylase (MAT) domain stretch occupies residues 931–1224; sequence FTGQGAYYHG…LVRSMIPSAP (294 aa). The segment at 1322 to 1458 is N-terminal hotdog fold; that stretch reads HQITAETVRT…ATILFEDPGA (137 aa). Residues 1322 to 1632 form the PKS/mFAS DH domain; that stretch reads HQITAETVRT…FRRVPRLLMD (311 aa). Histidine 1354 acts as the Proton acceptor; for dehydratase activity in catalysis. The interval 1390–1628 is product template (PT) domain; that stretch reads HMNLTDVEVL…GMIRFRRVPR (239 aa). The tract at residues 1486–1632 is C-terminal hotdog fold; that stretch reads ASRLSKPLAY…FRRVPRLLMD (147 aa). Aspartate 1543 acts as the Proton donor; for dehydratase activity in catalysis. A disordered region spans residues 1695–1721; it reads LLATSSGDSTPKEPPIVTPAESERAGP. The region spanning 1721 to 1798 is the Carrier domain; it reads PVDNNMISQC…EMTAWIEEYC (78 aa). At serine 1758 the chain carries O-(pantetheine 4'-phosphoryl)serine.

Pantetheine 4'-phosphate is required as a cofactor.

Its pathway is secondary metabolite biosynthesis. Non-reducing polyketide synthase; part of the gene cluster that mediates the biosynthesis of neosartoricin B, a prenylated anthracenone that probably exhibits T-cell antiproliferative activity, suggestive of a physiological role as an immunosuppressive agent. The non-reducing polyketide synthase nscA probably synthesizes and cyclizes the decaketide backbone. The hydrolase nscB then mediates the product release through hydrolysis followed by spontaneous decarboxylation. The prenyltransferase nscD catalyzes the addition of the dimethylallyl group to the aromatic C5. The FAD-dependent monooxygenase nscC is then responsible for the stereospecific hydroxylation at C2. Neosartoricin B can be converted into two additional compounds neosartoricins C and D. Neosartoricin C is a spirocyclic compound that is cyclized through the attack of C3 hydroxyl on C14, followed by dehydration. On the other hand, neosartoricin D is a further cyclized compound in which attack of C2 on C14 in neosartoricin C results in the formation of the acetal-containing dioxabicyclo-octanone ring. Both of these compounds are novel and possibly represent related metabolites of the gene cluster. This chain is Non-reducing polyketide synthase nscA, found in Trichophyton rubrum (strain ATCC MYA-4607 / CBS 118892) (Athlete's foot fungus).